A 456-amino-acid polypeptide reads, in one-letter code: Adenylosuccinate lyase (456 aa).

N(6)-(1,2-dicarboxyethyl)-AMP-binding positions include 15-16 (RY), 90-92 (NHD), and 122-123 (TS). His171 serves as the catalytic Proton donor/acceptor. Residue Gln247 coordinates N(6)-(1,2-dicarboxyethyl)-AMP. The active-site Proton donor/acceptor is the Ser295. N(6)-(1,2-dicarboxyethyl)-AMP-binding positions include Ser296, 301-303 (KVN), Asn309, Arg335, and 340-344 (STVLR).

This sequence belongs to the lyase 1 family. Adenylosuccinate lyase subfamily. Homotetramer. Residues from neighboring subunits contribute catalytic and substrate-binding residues to each active site.

The catalysed reaction is N(6)-(1,2-dicarboxyethyl)-AMP = fumarate + AMP. It catalyses the reaction (2S)-2-[5-amino-1-(5-phospho-beta-D-ribosyl)imidazole-4-carboxamido]succinate = 5-amino-1-(5-phospho-beta-D-ribosyl)imidazole-4-carboxamide + fumarate. It functions in the pathway purine metabolism; AMP biosynthesis via de novo pathway; AMP from IMP: step 2/2. It participates in purine metabolism; IMP biosynthesis via de novo pathway; 5-amino-1-(5-phospho-D-ribosyl)imidazole-4-carboxamide from 5-amino-1-(5-phospho-D-ribosyl)imidazole-4-carboxylate: step 2/2. Catalyzes two reactions in de novo purine nucleotide biosynthesis. Catalyzes the breakdown of 5-aminoimidazole- (N-succinylocarboxamide) ribotide (SAICAR or 2-[5-amino-1-(5-phospho-beta-D-ribosyl)imidazole-4-carboxamido]succinate) to 5-aminoimidazole-4-carboxamide ribotide (AICAR or 5-amino-1-(5-phospho-beta-D-ribosyl)imidazole-4-carboxamide) and fumarate, and of adenylosuccinate (ADS or N(6)-(1,2-dicarboxyethyl)-AMP) to adenosine monophosphate (AMP) and fumarate. The sequence is that of Adenylosuccinate lyase (purB) from Legionella pneumophila (strain Corby).